A 617-amino-acid polypeptide reads, in one-letter code: Sodium-coupled monocarboxylate transporter 2 (617 aa).

Residues 1-5 (MEVKN) are Extracellular-facing. Residues 6–26 (FAVWDYVVFAALFIISSGIGV) form a helical membrane-spanning segment. Residues 27-47 (FYAIKERKKATSREFLVGGRQ) lie on the Cytoplasmic side of the membrane. A helical transmembrane segment spans residues 48–68 (MSFGPVALSLTASFMSAVTVL). Residues 69–80 (GTPADVYRFGAS) lie on the Extracellular side of the membrane. A helical membrane pass occupies residues 81-101 (FVLFFITYGLVIILTSELFLP). Residues 102–128 (VFYRSGITSTYEYLQLRFNKPVRYAAT) lie on the Cytoplasmic side of the membrane. The helical transmembrane segment at 129 to 149 (VIYIVQTILYTGVVVYAPALA) threads the bilayer. The Extracellular portion of the chain corresponds to 150 to 157 (LNQVTGFD). A helical membrane pass occupies residues 158–178 (LWGSVFATGIVCTFYCTLGGL). Residues 179–180 (KA) are Cytoplasmic-facing. The helical transmembrane segment at 181-201 (VVWTDAFQMVVMIVGFLTVLI) threads the bilayer. Topologically, residues 202–235 (QGSTYAGGLHNVLEQAENGSRLNIFDFDIDPLRR) are extracellular. N-linked (GlcNAc...) asparagine glycosylation is present at N219. The helical transmembrane segment at 236–256 (HTFWTISVGGTFTWLGIYGVN) threads the bilayer. Topologically, residues 257–273 (QSTIQRCISCKTEKHAK) are cytoplasmic. The chain crosses the membrane as a helical span at residues 274–294 (LALYFNLLGLWIILLCAVFSG). The Extracellular segment spans residues 295–334 (LTMYAHFKDCDPWTSGIISAPDQLMPYFVMELFSTMPGLP). A helical transmembrane segment spans residues 335–357 (GLFVACAFSGTLSTVAASINALA). The Cytoplasmic portion of the chain corresponds to 358–385 (TVTFEDFVKSCFPRLSDKLSTWISKGLC). A helical transmembrane segment spans residues 386–406 (LLFGVICTSTAVAASLMGGVI). Residues 407-411 (QAALS) lie on the Extracellular side of the membrane. The helical transmembrane segment at 412-432 (IHGMCGGPMLGLFSLGILFPF) threads the bilayer. Over 433–437 (VNWKG) the chain is Cytoplasmic. A helical transmembrane segment spans residues 438 to 458 (ALAGLLTGILLSFWVAIGAFI). Residues 459–507 (YPAPASKTWPLPLSTDQCGLSNVTESVPPVLSSRPAIAETWYALSYLHY) are Extracellular-facing. The N-linked (GlcNAc...) asparagine glycan is linked to N480. A helical membrane pass occupies residues 508 to 528 (STVGCLGCIAAGVIISFLTGL). Topologically, residues 529 to 617 (QKGKDIPPLL…NMALEKITHF (89 aa)) are cytoplasmic.

Belongs to the sodium:solute symporter (SSF) (TC 2.A.21) family.

It is found in the apical cell membrane. The enzyme catalyses (S)-lactate(out) + Na(+)(out) = (S)-lactate(in) + Na(+)(in). The catalysed reaction is nicotinate(out) + Na(+)(out) = nicotinate(in) + Na(+)(in). It carries out the reaction pyruvate(out) + Na(+)(out) = pyruvate(in) + Na(+)(in). It catalyses the reaction propanoate(out) + Na(+)(out) = propanoate(in) + Na(+)(in). The enzyme catalyses butanoate(out) + Na(+)(out) = butanoate(in) + Na(+)(in). The catalysed reaction is acetoacetate(out) + Na(+)(out) = acetoacetate(in) + Na(+)(in). Its function is as follows. Acts as an electroneutral and low-affinity sodium (Na(+))-dependent sodium-coupled solute transporter. Catalyzes the transport across the plasma membrane of many monocarboxylates such as lactate, pyruvate, nicotinate, propionate, butyrate and beta-D-hydroxybutyrate. May be responsible for the first step of reabsorption of monocarboxylates from the lumen of the proximal tubule of the kidney and the small intestine. May play also a role in monocarboxylates transport in the retina. Mediates electroneutral uptake of lactate, with a stoichiometry of 2 Na(+) for each lactate. The sequence is that of Sodium-coupled monocarboxylate transporter 2 (SLC5A12) from Bos taurus (Bovine).